Reading from the N-terminus, the 90-residue chain is Lectin-1 (90 aa).

Gln1 carries the pyrrolidone carboxylic acid modification. Cys46 and Cys71 are oxidised to a cystine.

Post-translationally, the N-terminus is blocked. In terms of processing, contains seven disulfide bonds. Proteolytically cleaved. Major mature form may consist of cleaved, disulfide-bonded N-terminal and C-terminal chains.

Functionally, lectin with specificity for complex N-linked glycans and O-linked glycans. Has hemagglutinating activity towards rabbit erythrocytes. The polypeptide is Lectin-1 (Hypnea musciformis (Red alga)).